We begin with the raw amino-acid sequence, 62 residues long: Keratin-associated protein 6-2 (62 aa).

This sequence belongs to the KRTAP type 6 family. In terms of assembly, interacts with hair keratins.

In terms of biological role, in the hair cortex, hair keratin intermediate filaments are embedded in an interfilamentous matrix, consisting of hair keratin-associated proteins (KRTAP), which are essential for the formation of a rigid and resistant hair shaft through their extensive disulfide bond cross-linking with abundant cysteine residues of hair keratins. The matrix proteins include the high-sulfur and high-glycine-tyrosine keratins. The polypeptide is Keratin-associated protein 6-2 (KRTAP6-2) (Homo sapiens (Human)).